The sequence spans 140 residues: MAKKVTAVIKLALPAGKATPAPPVGPALGAHGVNIMAFCKEYNERTKDQVGLVIPVEITVYEDRSFTFILKTPPTAVLIKKALGIETASGVPNKQKVGKLTDAQVEEIAKIKMPDLNANDLEAAKRMVRGTARSMGVDVE.

It belongs to the universal ribosomal protein uL11 family. In terms of assembly, part of the ribosomal stalk of the 50S ribosomal subunit. Interacts with L10 and the large rRNA to form the base of the stalk. L10 forms an elongated spine to which L12 dimers bind in a sequential fashion forming a multimeric L10(L12)X complex. Post-translationally, one or more lysine residues are methylated.

Its function is as follows. Forms part of the ribosomal stalk which helps the ribosome interact with GTP-bound translation factors. The chain is Large ribosomal subunit protein uL11 from Symbiobacterium thermophilum (strain DSM 24528 / JCM 14929 / IAM 14863 / T).